The primary structure comprises 429 residues: Zygotic gap protein knirps (429 aa).

Positions 2–78 (NQTCKVCGEP…VGMSKGGSRY (77 aa)) form a DNA-binding region, nuclear receptor. 2 NR C4-type zinc fingers span residues 5 to 25 (CKVC…CEGC) and 42 to 66 (CKNE…LRKC). The segment covering 112-126 (SVGGAPSASSPVGSP) has biased composition (low complexity). 4 disordered regions span residues 112 to 148 (SVGG…QQQQ), 223 to 250 (QSVD…SSAR), 338 to 357 (TSRS…QEVE), and 375 to 397 (SSSS…AEVK). Composition is skewed to polar residues over residues 225–237 (VDSV…FSPA) and 338–349 (TSRSSVHSFNDS). Low complexity predominate over residues 375–393 (SSSSSSHSAAHSPNTTTAH).

The protein belongs to the nuclear hormone receptor family. NR0 subfamily.

The protein localises to the nucleus. Transcriptional repressor. Binds to multiple sites in the eve stripe 3 enhancer element. Plays an essential role in the segmentation process both by refining the expression patterns of gap genes and by establishing pair-rules stripes of gene expression. This is Zygotic gap protein knirps (kni) from Drosophila melanogaster (Fruit fly).